We begin with the raw amino-acid sequence, 286 residues long: CBY1-interacting BAR domain-containing protein 1 (286 aa).

The transit peptide at 1 to 47 directs the protein to the mitochondrion; it reads MLRRNLDERDAQTKQLQDAVTNVEKHFGELCQIFAAYVRKTARLRDK. The tract at residues 10–220 is BAR-like; the sequence is DAQTKQLQDA…NIDEDEDLEV (211 aa). Residues 107 to 178 adopt a coiled-coil conformation; the sequence is KMKRDDLKAT…IDNFEKQKIK (72 aa). The segment at 258 to 286 is disordered; the sequence is GQISTCRTRKDQQVEDEDDEELDVTEDEN. The segment covering 271–286 has biased composition (acidic residues); it reads VEDEDDEELDVTEDEN.

This sequence belongs to the CIBAR family. As to quaternary structure, homodimer (via BAR-like domain). Heterodimer with FAM92B (via BAR-like domains). Interacts (via BAR-like domain) with CBY1; this interaction is required for targeting FAM92A to centriole and cilium basal body. Interacts (via BAR-like domain) with CBY3; both proteins form a ninefold symmetric structure at the flagellar base; are recruited to the annulus in a mutually dependent manner and regulate annulus positionning. Expressed in the heart, liver, spleen, lung, kidney, brain and muscle (at protein level). Strongly expressed throughout the developing limb bud, including the progress zone and the apical ectodermal ridge.

It localises to the cytoplasm. The protein localises to the cytoskeleton. The protein resides in the microtubule organizing center. Its subcellular location is the centrosome. It is found in the centriole. It localises to the cilium basal body. The protein localises to the cell projection. The protein resides in the cilium. Its subcellular location is the nucleus. It is found in the mitochondrion inner membrane. It localises to the flagellum. Plays a critical role in regulating mitochondrial ultrastructure and function by maintaining the integrity of mitochondrial morphology, particularly the organization of cristae. Preferentially binds to negatively charged phospholipids like cardiolipin and phosphatidylinositol 4,5-bisphosphate enhancing its interaction with mitochondrial membranes. Induces membrane curvature and tubulation, which are critical for maintaining mitochondrial ultrastructure and the organization of cristae. Plays a crucial role in ciliogenesis. May play a role in limb development through its role in ciliogenesis. Plays a key role in the correct positioning of the annulus, a septin-based ring structure in the sperm flagellum, serving both as a physical barrier and a membrane diffusion barrier that separates the midpiece (MP) from the principal piece (PP). This positioning is essential for proper sperm motility and function. Interacts with CBY3 to form a complex which localizes to the curved membrane region of the flagellar pocket. By doing so, may provide stability and rigidity to the periannular membrane to prevent membrane deformation. This function is crucial for halting annulus migration at the proximal end of the fibrous sheath-containing PP. In Mus musculus (Mouse), this protein is CBY1-interacting BAR domain-containing protein 1.